The sequence spans 345 residues: N-acetyl-gamma-glutamyl-phosphate reductase (345 aa).

The active site involves Cys-149.

Belongs to the NAGSA dehydrogenase family. Type 1 subfamily.

The protein localises to the cytoplasm. The enzyme catalyses N-acetyl-L-glutamate 5-semialdehyde + phosphate + NADP(+) = N-acetyl-L-glutamyl 5-phosphate + NADPH + H(+). It participates in amino-acid biosynthesis; L-arginine biosynthesis; N(2)-acetyl-L-ornithine from L-glutamate: step 3/4. Its function is as follows. Catalyzes the NADPH-dependent reduction of N-acetyl-5-glutamyl phosphate to yield N-acetyl-L-glutamate 5-semialdehyde. This is N-acetyl-gamma-glutamyl-phosphate reductase from Herminiimonas arsenicoxydans.